A 249-amino-acid chain; its full sequence is uncharacterized protein (249 aa).

2 consecutive transmembrane segments (helical) span residues 49–69 and 223–243; these read ILLSFFGLLLGLFFTSWCYLL and IVMSSFILVVGFAAAVLVHHL.

It localises to the cell membrane. This is an uncharacterized protein from Bacillus anthracis.